The chain runs to 149 residues: Large ribosomal subunit protein bL9 (149 aa).

The protein belongs to the bacterial ribosomal protein bL9 family.

Binds to the 23S rRNA. The protein is Large ribosomal subunit protein bL9 of Xylella fastidiosa (strain 9a5c).